The primary structure comprises 202 residues: Precorrin-2 dehydrogenase (202 aa).

NAD(+) contacts are provided by residues 20 to 21 and 41 to 42; these read TI and PT.

The protein belongs to the precorrin-2 dehydrogenase / sirohydrochlorin ferrochelatase family. In terms of assembly, homodimer.

It catalyses the reaction precorrin-2 + NAD(+) = sirohydrochlorin + NADH + 2 H(+). It functions in the pathway cofactor biosynthesis; adenosylcobalamin biosynthesis; sirohydrochlorin from precorrin-2: step 1/1. The protein operates within porphyrin-containing compound metabolism; siroheme biosynthesis; sirohydrochlorin from precorrin-2: step 1/1. Its function is as follows. Catalyzes the dehydrogenation of precorrin-2 to form sirohydrochlorin which is used as a precursor in both siroheme biosynthesis and in the anaerobic branch of adenosylcobalamin biosynthesis. It is unable to oxidize precorrin-3. This is Precorrin-2 dehydrogenase (sirC) from Priestia megaterium (Bacillus megaterium).